Reading from the N-terminus, the 428-residue chain is 3-phosphoshikimate 1-carboxyvinyltransferase (428 aa).

3 residues coordinate 3-phosphoshikimate: K21, S22, and R26. K21 lines the phosphoenolpyruvate pocket. Positions 92 and 120 each coordinate phosphoenolpyruvate. 4 residues coordinate 3-phosphoshikimate: S165, Q167, D313, and K340. Position 167 (Q167) interacts with phosphoenolpyruvate. Catalysis depends on D313, which acts as the Proton acceptor. The phosphoenolpyruvate site is built by R344 and R386.

The protein belongs to the EPSP synthase family. In terms of assembly, monomer.

The protein resides in the cytoplasm. The enzyme catalyses 3-phosphoshikimate + phosphoenolpyruvate = 5-O-(1-carboxyvinyl)-3-phosphoshikimate + phosphate. It participates in metabolic intermediate biosynthesis; chorismate biosynthesis; chorismate from D-erythrose 4-phosphate and phosphoenolpyruvate: step 6/7. In terms of biological role, catalyzes the transfer of the enolpyruvyl moiety of phosphoenolpyruvate (PEP) to the 5-hydroxyl of shikimate-3-phosphate (S3P) to produce enolpyruvyl shikimate-3-phosphate and inorganic phosphate. This Carboxydothermus hydrogenoformans (strain ATCC BAA-161 / DSM 6008 / Z-2901) protein is 3-phosphoshikimate 1-carboxyvinyltransferase.